Reading from the N-terminus, the 394-residue chain is GPI mannosyltransferase 2 (394 aa).

A run of 9 helical transmembrane segments spans residues Leu2 to Phe22, Tyr47 to Phe67, Leu104 to Leu124, Phe132 to Asn152, Ser185 to Val205, Ile232 to Tyr252, Ile293 to Met313, Leu323 to Ile343, and Tyr371 to Leu391.

This sequence belongs to the PIGV family.

It localises to the endoplasmic reticulum membrane. It participates in glycolipid biosynthesis; glycosylphosphatidylinositol-anchor biosynthesis. Mannosyltransferase involved in glycosylphosphatidylinositol-anchor biosynthesis. Transfers the second mannose to the glycosylphosphatidylinositol during GPI precursor assembly. This is GPI mannosyltransferase 2 (GPI18) from Candida albicans (strain SC5314 / ATCC MYA-2876) (Yeast).